Consider the following 176-residue polypeptide: MPEEIATLAGGCFWCTEAAFKLLRGVLEVVPGYAGGHVPHPTYEEVCTGTTGHREAVQVRFDPGVLPYADLLRYFFAVHDPTSEDRQGPDVGPQYSPAIFYHSEEQKRVAEAVMRELAPLYPKPIATKLLPFTTFYPAEAYHRDYFARHPEAPYCRFVIAPKLEKARKAFKSLLRP.

The active site involves C12.

Belongs to the MsrA Met sulfoxide reductase family.

It carries out the reaction L-methionyl-[protein] + [thioredoxin]-disulfide + H2O = L-methionyl-(S)-S-oxide-[protein] + [thioredoxin]-dithiol. It catalyses the reaction [thioredoxin]-disulfide + L-methionine + H2O = L-methionine (S)-S-oxide + [thioredoxin]-dithiol. Its function is as follows. Has an important function as a repair enzyme for proteins that have been inactivated by oxidation. Catalyzes the reversible oxidation-reduction of methionine sulfoxide in proteins to methionine. This Thermus thermophilus (strain ATCC 27634 / DSM 579 / HB8) protein is Peptide methionine sulfoxide reductase MsrA.